The chain runs to 305 residues: Endonuclease 1 (305 aa).

The signal sequence occupies residues 1–28; it reads MASAFRSSTRLILVLGILILCSVSSVRS. A divalent metal cation contacts are provided by Trp-29 and His-34. 29–34 is a binding site for substrate; the sequence is WSKEGH. Cys-38 and Cys-69 are oxidised to a cystine. A divalent metal cation-binding residues include Asp-73 and His-88. Residues 73 to 79, 88 to 91, and 98 to 103 each bind substrate; these read DQIRHWY, HYID, and SYEYSR. Disulfide bonds link Cys-97–Cys-249, Cys-105–Cys-115, and Cys-230–Cys-236. The substrate site is built by Asn-122 and Tyr-139. A glycan (N-linked (GlcNAc...) asparagine) is linked at Asn-122. An N-linked (GlcNAc...) asparagine glycan is attached at Asn-140. The a divalent metal cation site is built by His-150, Asp-154, His-160, His-184, and Asp-188. The tract at residues 150 to 199 is substrate binding; sequence HFMGDIHQPMHVGFTSDEGGNTIDLRWYKHKSNLHHVWDREIILTALKEN. N-linked (GlcNAc...) asparagine glycosylation occurs at Asn-214. Positions 287-305 are cleaved as a propeptide — removed in mature form; it reads MILNRVFSDDHAIAGVAAT.

It belongs to the nuclease type I family. Monomer. Mn(2+) is required as a cofactor. Requires Ca(2+) as cofactor. As to expression, mostly expressed in flowers and during leaf and stem senescence, and, to a lower extent, detectable at low levels in roots, leaves, and stems. Particularly expressed in senescing tissues in a NAC92/ORE1-dependent manner.

It carries out the reaction Endonucleolytic cleavage to 5'-phosphomononucleotide and 5'-phosphooligonucleotide end-products.. Functionally, endonuclease that can use RNA, single-stranded and double-stranded DNA as substrates. Hydrolyzes single-stranded DNA and RNA without apparent specificity for bases during senescence. Endonuclease that recognizes and cleaves all types of mismatches with high efficiency, including heteroduplex double-stranded DNA. Maybe involved in programmed cell death (PCD) and senescence. The sequence is that of Endonuclease 1 from Arabidopsis thaliana (Mouse-ear cress).